Here is a 171-residue protein sequence, read N- to C-terminus: Protein-export protein SecB (171 aa).

This sequence belongs to the SecB family. In terms of assembly, homotetramer, a dimer of dimers. One homotetramer interacts with 1 SecA dimer.

The protein resides in the cytoplasm. One of the proteins required for the normal export of preproteins out of the cell cytoplasm. It is a molecular chaperone that binds to a subset of precursor proteins, maintaining them in a translocation-competent state. It also specifically binds to its receptor SecA. The chain is Protein-export protein SecB from Xanthomonas oryzae pv. oryzae (strain MAFF 311018).